Consider the following 146-residue polypeptide: Gonadotropin subunit beta-2 (146 aa).

The N-terminal stretch at 1–28 (TGTPVKILVVRNILLLLFCLVVLLVFAQ) is a signal peptide. 6 cysteine pairs are disulfide-bonded: cysteine 35–cysteine 83, cysteine 49–cysteine 98, cysteine 52–cysteine 136, cysteine 60–cysteine 114, cysteine 64–cysteine 116, and cysteine 119–cysteine 126. N-linked (GlcNAc...) asparagine glycosylation is present at asparagine 39.

It belongs to the glycoprotein hormones subunit beta family. As to quaternary structure, heterodimer of an alpha and a beta chain.

The protein resides in the secreted. Its function is as follows. Involved in gametogenesis and steroidogenesis. The chain is Gonadotropin subunit beta-2 (cgbb) from Ctenopharyngodon idella (Grass carp).